Reading from the N-terminus, the 206-residue chain is Large ribosomal subunit protein uL4 (206 aa).

The disordered stretch occupies residues 43–78; it reads ARSGNRKQKDREEVKHTTKKPWRQKGTGRARAGMSS. The segment covering 49–58 has biased composition (basic and acidic residues); sequence KQKDREEVKH. A compositionally biased stretch (basic residues) spans 59-70; it reads TTKKPWRQKGTG.

Belongs to the universal ribosomal protein uL4 family. Part of the 50S ribosomal subunit.

Functionally, one of the primary rRNA binding proteins, this protein initially binds near the 5'-end of the 23S rRNA. It is important during the early stages of 50S assembly. It makes multiple contacts with different domains of the 23S rRNA in the assembled 50S subunit and ribosome. In terms of biological role, forms part of the polypeptide exit tunnel. This chain is Large ribosomal subunit protein uL4, found in Cupriavidus metallidurans (strain ATCC 43123 / DSM 2839 / NBRC 102507 / CH34) (Ralstonia metallidurans).